Consider the following 106-residue polypeptide: Putative cytochrome c oxidase subunit 7A3, mitochondrial (106 aa).

Residues methionine 1–histidine 23 constitute a mitochondrion transit peptide.

It belongs to the cytochrome c oxidase VIIa family.

Its subcellular location is the mitochondrion inner membrane. The chain is Putative cytochrome c oxidase subunit 7A3, mitochondrial (COX7A2P2) from Homo sapiens (Human).